Consider the following 585-residue polypeptide: Zinc finger protein Eos (585 aa).

Disordered stretches follow at residues 1–43 (MHTP…PDFL) and 68–98 (EKEF…SANS). The segment covering 25–34 (QGKDNLERDP) has biased composition (basic and acidic residues). Positions 79–98 (SVSTPNSQHSSPSRSLSANS) are enriched in polar residues. Lysine 100 participates in a covalent cross-link: Glycyl lysine isopeptide (Lys-Gly) (interchain with G-Cter in SUMO2). Serine 105 is modified (phosphoserine). C2H2-type zinc fingers lie at residues 159 to 181 (LKCD…KRSH), 187 to 209 (FHCN…IKLH), 215 to 237 (FKCP…LRTH), and 248 to 271 (YKCN…ERCH). An interaction with FOXP3 region spans residues 281–585 (AQALAGQPGD…HIVRGEHKVG (305 aa)). Lysine 335 carries the post-translational modification N6-acetyllysine. A disordered region spans residues 410-489 (PGRLELPGSR…QPPPTIVVGR (80 aa)). The CTBP-binding motif PEDLA motif lies at 425-429 (PEDLA). Positions 475-484 (QGPPPQPPPT) are enriched in pro residues. Lysine 500 participates in a covalent cross-link: Glycyl lysine isopeptide (Lys-Gly) (interchain with G-Cter in SUMO2). 2 consecutive C2H2-type zinc fingers follow at residues 530 to 552 (FKCE…MGCH) and 558 to 582 (FECN…RGEH).

Belongs to the Ikaros C2H2-type zinc-finger protein family. As to quaternary structure, self-associates. Interacts with other family members; IKZF1, IKZF2, IKZF3 and IKZF5. Interacts with CTBP2. Interacts with SPI1, MITF, FOXP3 and CTBP1. Highly expressed in skeletal muscle, low levels of expression in heart, thymus, kidney, liver, and spleen. Expressed in the hematopoietic cell lines MOLT-4, NALM-6 and K-562. Highly expressed in THP-1 and M-07e cell lines, which have characteristics of myeloid and early megakaryocytic cells respectively.

It is found in the nucleus. Functionally, DNA-binding protein that binds to the 5'GGGAATRCC-3' Ikaros-binding sequence. Transcriptional repressor. Interacts with SPI1 and MITF to repress transcription of the CTSK and ACP5 promoters via recruitment of corepressors SIN3A and CTBP2. May be involved in the development of central and peripheral nervous systems. Essential for the inhibitory function of regulatory T-cells (Treg). Mediates FOXP3-mediated gene silencing in regulatory T-cells (Treg) via recruitment of corepressor CTBP1. This chain is Zinc finger protein Eos (IKZF4), found in Homo sapiens (Human).